A 329-amino-acid chain; its full sequence is Delta-aminolevulinic acid dehydratase (329 aa).

Lys-202 functions as the Schiff-base intermediate with substrate in the catalytic mechanism. Arg-212 and Arg-223 together coordinate 5-aminolevulinate. Mg(2+) is bound at residue Glu-239. Residue Lys-254 is the Schiff-base intermediate with substrate of the active site. 5-aminolevulinate is bound by residues Ser-280 and Tyr-319.

The protein belongs to the ALAD family. Homooctamer.

It catalyses the reaction 2 5-aminolevulinate = porphobilinogen + 2 H2O + H(+). It participates in porphyrin-containing compound metabolism; protoporphyrin-IX biosynthesis; coproporphyrinogen-III from 5-aminolevulinate: step 1/4. Catalyzes an early step in the biosynthesis of tetrapyrroles. Binds two molecules of 5-aminolevulinate per subunit, each at a distinct site, and catalyzes their condensation to form porphobilinogen. This Mycobacterium tuberculosis (strain CDC 1551 / Oshkosh) protein is Delta-aminolevulinic acid dehydratase (hemB).